The following is a 93-amino-acid chain: Acylphosphatase (93 aa).

The Acylphosphatase-like domain occupies 3-93 (KQQYFISGKV…FQFNNFKIYY (91 aa)). Residues R18 and N36 contribute to the active site.

It belongs to the acylphosphatase family.

The catalysed reaction is an acyl phosphate + H2O = a carboxylate + phosphate + H(+). The protein is Acylphosphatase (acyP) of Borrelia garinii subsp. bavariensis (strain ATCC BAA-2496 / DSM 23469 / PBi) (Borreliella bavariensis).